A 345-amino-acid polypeptide reads, in one-letter code: Serine/threonine-protein kinase US3 homolog (345 aa).

The region spanning 49–334 (FSVLETFTPG…KALLDFAAFY (286 aa)) is the Protein kinase domain. Residues 55-63 (FTPGAEGFT) and lysine 78 contribute to the ATP site. Aspartate 162 serves as the catalytic Proton acceptor.

Belongs to the protein kinase superfamily. Ser/Thr protein kinase family. Post-translationally, phosphorylated by UL13 homolog; this phosphorylation regulates subsequent phosphorylation of UL31 and UL34 homologs by US3. Autophosphorylated.

The protein resides in the host cytoplasm. The protein localises to the host nucleus. The enzyme catalyses L-seryl-[protein] + ATP = O-phospho-L-seryl-[protein] + ADP + H(+). It carries out the reaction L-threonyl-[protein] + ATP = O-phospho-L-threonyl-[protein] + ADP + H(+). In terms of biological role, multifunctional serine/threonine kinase that plays a role in several processes including egress of virus particles from the nucleus, modulation of the actin cytoskeleton and inhibition of apoptosis. Phosphorylates UL31 and UL34 homologs, two critical regulators of capsid budding from nucleus to endoplasmic reticulum, thereby facilitating virion egress. Modulates and redistributes host components of the nuclear envelope, including LMNA, emerin/EMD and the nuclear matrix protein MATR3. Phosphorylates envelope glycoprotein B (gB), probably to direct it to the cell surface. Promotes virus intracellular spread by restructuring host cell cytoskeleton. Blocks host apoptosis to extend cell survival and allow efficient viral replication. Promotes viral gene expression by phosphorylating host HDAC2 to reduce viral genome silencing. The chain is Serine/threonine-protein kinase US3 homolog (US2) from Chlorocebus aethiops (Green monkey).